The sequence spans 603 residues: Elongation factor 4 (603 aa).

The tr-type G domain maps to 7-189 (SRIRNFSIIA…SIVHLVPPPQ (183 aa)). GTP contacts are provided by residues 19–24 (DHGKST) and 136–139 (NKID).

Belongs to the TRAFAC class translation factor GTPase superfamily. Classic translation factor GTPase family. LepA subfamily.

It localises to the cell inner membrane. It catalyses the reaction GTP + H2O = GDP + phosphate + H(+). Required for accurate and efficient protein synthesis under certain stress conditions. May act as a fidelity factor of the translation reaction, by catalyzing a one-codon backward translocation of tRNAs on improperly translocated ribosomes. Back-translocation proceeds from a post-translocation (POST) complex to a pre-translocation (PRE) complex, thus giving elongation factor G a second chance to translocate the tRNAs correctly. Binds to ribosomes in a GTP-dependent manner. This Rippkaea orientalis (strain PCC 8801 / RF-1) (Cyanothece sp. (strain PCC 8801)) protein is Elongation factor 4.